The chain runs to 628 residues: tRNA uridine 5-carboxymethylaminomethyl modification enzyme MnmG (628 aa).

Residues 14-19 (GAGHAG), Val126, and Ser181 contribute to the FAD site. Residue 273 to 287 (GPRYCPSIEDKVVRF) coordinates NAD(+). Residue Gln370 coordinates FAD.

It belongs to the MnmG family. As to quaternary structure, homodimer. Heterotetramer of two MnmE and two MnmG subunits. It depends on FAD as a cofactor.

The protein resides in the cytoplasm. NAD-binding protein involved in the addition of a carboxymethylaminomethyl (cmnm) group at the wobble position (U34) of certain tRNAs, forming tRNA-cmnm(5)s(2)U34. The protein is tRNA uridine 5-carboxymethylaminomethyl modification enzyme MnmG of Bacillus subtilis (strain 168).